The sequence spans 227 residues: N-acetyltransferase 8 (227 aa).

Over 1–42 (MAPCHIRKYQESDRQWVVGLLSRGMAEHAPATFRQLLKLPRT) the chain is Cytoplasmic. Residues 43–63 (LILLLGGPLALLLVSGSWLLA) form a helical; Signal-anchor for type II membrane protein membrane-spanning segment. In terms of domain architecture, N-acetyltransferase spans 61 to 220 (LLALVFSISL…HTVHFIYHLP (160 aa)). Over 64-227 (LVFSISLFPA…HLPSSKVGSL (164 aa)) the chain is Lumenal.

This sequence belongs to the NAT8 family. In terms of tissue distribution, preferentially expressed in liver and kidney. Also detected in brain (at protein level).

Its subcellular location is the endoplasmic reticulum-Golgi intermediate compartment membrane. It is found in the endoplasmic reticulum membrane. The enzyme catalyses L-lysyl-[protein] + acetyl-CoA = N(6)-acetyl-L-lysyl-[protein] + CoA + H(+). It carries out the reaction an S-substituted L-cysteine + acetyl-CoA = an N-acetyl-L-cysteine-S-conjugate + CoA + H(+). The protein operates within sulfur metabolism; glutathione metabolism. In terms of biological role, endoplasmic reticulum (ER)-membrane-bound lysine N-acetyltransferase catalyzing the N6-acetylation of lysine residues in the lumen of the ER in various proteins, including PROM1 and BACE1, using acetyl-CoA as acetyl donor. Thereby, may regulate apoptosis through the acetylation and the regulation of the expression of PROM1. May also regulate amyloid beta-peptide secretion through acetylation of BACE1 and the regulation of its expression in neurons. N(6)-lysine acetylation in the ER maintains protein homeostasis and regulates reticulophagy. Alternatively, acetylates the free alpha-amino group of cysteine S-conjugates to form mercapturic acids. This is the final step in a major route for detoxification of a wide variety of reactive electrophiles which starts with their incorporation into glutathione S-conjugates. The glutathione S-conjugates are then further processed into cysteine S-conjugates and finally mercapturic acids which are water soluble and can be readily excreted in urine or bile. The protein is N-acetyltransferase 8 of Homo sapiens (Human).